Reading from the N-terminus, the 722-residue chain is Dual specificity tyrosine-phosphorylation-regulated kinase 2 (722 aa).

At Ser25 the chain carries Phosphoserine. Positions 54–127 are disordered; the sequence is TTTSLNGNGN…SGELKCNTPM (74 aa). Residues 66-119 are compositionally biased toward low complexity; that stretch reads GNSNSNNNNNIGSPVSSSTTNSSNGGNERGSSTKSNSSSGSGSSGNSASSTGSG. Positions 198-494 constitute a Protein kinase domain; sequence YEILEVIGKG…PDEAAHHEFL (297 aa). ATP-binding positions include 204–212 and Lys227; that span reads IGKGSFGQV. The active-site Proton acceptor is the Asp324. Phosphotyrosine; by autocatalysis occurs at positions 356 and 358. Disordered stretches follow at residues 494-519, 557-582, 624-643, and 679-722; these read LQPSASSRHRSCRMSSSSSSSGLNSV, TTKSRQQPPSQSHGHAQSNGHLPDIK, GSGSTHHVSSAATRKHLPGT, and TTTH…FGRA. Positions 506 to 519 are enriched in low complexity; sequence RMSSSSSSSGLNSV. A compositionally biased stretch (polar residues) spans 557 to 576; that stretch reads TTKSRQQPPSQSHGHAQSNG. Low complexity-rich tracts occupy residues 626-635 and 689-707; these read GSTHHVSSAA and GQQQQQSSSGASTMAMSHS.

This sequence belongs to the protein kinase superfamily. CMGC Ser/Thr protein kinase family. MNB/DYRK subfamily. It depends on Mg(2+) as a cofactor. In terms of processing, phosphorylated on serine/threonine residues.

The protein resides in the cytoplasm. The catalysed reaction is L-seryl-[protein] + ATP = O-phospho-L-seryl-[protein] + ADP + H(+). It carries out the reaction L-threonyl-[protein] + ATP = O-phospho-L-threonyl-[protein] + ADP + H(+). The enzyme catalyses L-tyrosyl-[protein] + ATP = O-phospho-L-tyrosyl-[protein] + ADP + H(+). Autophosphorylates on Tyr-356 and Tyr-358. In terms of biological role, in vitro; can phosphorylate exogenous substrates on Ser and Thr residues. May have a physiological role in development being involved in cellular growth and differentiation. The polypeptide is Dual specificity tyrosine-phosphorylation-regulated kinase 2 (Drosophila melanogaster (Fruit fly)).